Reading from the N-terminus, the 295-residue chain is Glutamyl-Q tRNA(Asp) synthetase (295 aa).

Residues 9 to 13 and Glu45 contribute to the L-glutamate site; that span reads RFAPT. The 'HIGH' region motif lies at 12 to 22; it reads PTPSGFLHFGS. Zn(2+)-binding residues include Cys101, Cys103, Tyr115, and Cys119. Positions 172 and 190 each coordinate L-glutamate. A 'KMSKS' region motif is present at residues 228-232; it reads KLGKS. Lys231 provides a ligand contact to ATP.

It belongs to the class-I aminoacyl-tRNA synthetase family. GluQ subfamily. Requires Zn(2+) as cofactor.

Catalyzes the tRNA-independent activation of glutamate in presence of ATP and the subsequent transfer of glutamate onto a tRNA(Asp). Glutamate is transferred on the 2-amino-5-(4,5-dihydroxy-2-cyclopenten-1-yl) moiety of the queuosine in the wobble position of the QUC anticodon. In Pseudomonas entomophila (strain L48), this protein is Glutamyl-Q tRNA(Asp) synthetase.